We begin with the raw amino-acid sequence, 401 residues long: MVKMRRITPTRLLFTCRYISNNASPPVQPLNVLFFGSDTFSNFSLQALNELRQNNGSCGIVDNIQVVTRSPKWCGRQKSILKYPPIFDMAEKLQLPRPITCDTKQEMLALSKLTPSRQGNPENDGSGAPFNAIIAVSFGKLIPGDLIRAVPLALNVHPSLLPRHKGSAPIQRALLEGDTYTGVTIQTLHPDRFDHGAIVAQTEPLAIATMLSKGRVNDSTADFNSEGLPRRTAILMDQLGALGAQLLGQTLRERLYLPQNRVQAPTAYKPSYAHRITTEDKRIHWARDSAAELLNKLETLGPLHAFKEATAARKDAQNSVLKRILFHECKVMRDARLDNGSKPGMFKYDDIKDCILVTCRGNLLLCVSRLQFEGFAVERAGQFMARLRKRCGALSEKLVFL.

The N-terminal 26 residues, methionine 1 to proline 26, are a transit peptide targeting the mitochondrion. Residues tyrosine 18–serine 20 and valine 66–serine 70 each bind (6R)-10-formyltetrahydrofolate.

This sequence belongs to the Fmt family. Phosphorylated by GCN2 in response to nutrient deprivation. Phosphorylation mediates retention of FMT1 in the cytoplasm.

The protein resides in the mitochondrion. The protein localises to the mitochondrion matrix. It localises to the cytoplasm. The catalysed reaction is L-methionyl-tRNA(fMet) + (6R)-10-formyltetrahydrofolate = N-formyl-L-methionyl-tRNA(fMet) + (6S)-5,6,7,8-tetrahydrofolate + H(+). Functionally, formylates methionyl-tRNA in mitochondria and the cytoplasm. Responsible for the formylation of the 8 N-terminally formylated (Nt-formylated) mitochondrial matrix proteins that are encoded by mitochondrial DNA. Nt-formylated proteins in the cytoplasm are strongly up-regulated in stationary phase or upon starvation for specific amino acids (His or Lys) and are targeted for degradation by a PSH1 E3 ubiquitin ligase-mediated fMet/N-end rule pathway. Increased Nt-formylation of cytosolic proteins appears to be important for adaptation to these stresses. Stationary phase-degraded Nt-formylated proteins include histone H3-like centromeric protein CSE4, Mediator complex subunit 3 (PGD1) and small ribosomal subunit protein uS8-A (RPS22A). In Saccharomyces cerevisiae (strain ATCC 204508 / S288c) (Baker's yeast), this protein is Methionyl-tRNA formyltransferase, mitochondrial (FMT1).